Consider the following 349-residue polypeptide: PDZ and LIM domain protein 2 (349 aa).

Residues 1-84 form the PDZ domain; it reads MALTVNVVGP…PLRLQLDRSQ (84 aa). Disordered stretches follow at residues 72-95 and 108-147; these read SASP…NGEG and LRTH…PIAL. 2 stretches are compositionally biased toward polar residues: residues 81 to 90 and 108 to 121; these read DRSQTASPGQ and LRTH…QRSA. A phosphoserine mark is found at Ser-124, Ser-127, Ser-129, Ser-134, and Ser-137. Residues Thr-138 and Thr-142 each carry the phosphothreonine modification. Phosphoserine is present on residues Ser-143 and Ser-163. Disordered regions lie at residues 168–212 and 250–272; these read ATHH…SSLD and ERGG…PTSR. Positions 176 to 192 are enriched in polar residues; it reads GQPTSQQAGHSSPSDST. 6 positions are modified to phosphoserine: Ser-199, Ser-204, Ser-205, Ser-209, Ser-210, and Ser-263. Residues 199–211 show a composition bias toward low complexity; the sequence is SPGRPSSPRLSSL. The segment covering 260–270 has biased composition (polar residues); it reads SSLSPKASLPT. The LIM zinc-binding domain occupies 281-341; it reads HTCEKCSVNI…EKHARQRYSM (61 aa).

As to quaternary structure, interacts with alpha-actinins ACTN1 and ACTN4, FLNA and MYH9. Interacts (via LIM zinc-binding domain) with MKRN2. As to expression, highly expressed in cornea and lung. Expressed at intermediate level in sclera and combined tissues of the eye irido-corneal angle. Specifically expressed in the corneal epithelial cells but not in other corneal layers.

It localises to the cytoplasm. Its subcellular location is the cytoskeleton. Probable adapter protein located at the actin cytoskeleton that promotes cell attachment. Necessary for the migratory capacity of epithelial cells. Overexpression enhances cell adhesion to collagen and fibronectin and suppresses anchorage independent growth. May contribute to tumor cell migratory capacity. The chain is PDZ and LIM domain protein 2 (Pdlim2) from Rattus norvegicus (Rat).